A 40-amino-acid polypeptide reads, in one-letter code: AQCGAQGGGATCPGGLCCSQWGWCGSTPKYCGAGCQSNCK.

The Chitin-binding type-1 domain occupies 1 to 40; that stretch reads AQCGAQGGGATCPGGLCCSQWGWCGSTPKYCGAGCQSNCK. 4 cysteine pairs are disulfide-bonded: Cys-3/Cys-18, Cys-12/Cys-24, Cys-17/Cys-31, and Cys-35/Cys-39.

Post-translationally, not glycosylated.

In terms of biological role, antimicrobial peptide active against plant pathogenic fungi and Gram-negative and -positive bacteria. The protein is Antimicrobial peptide 1 of Fagopyrum esculentum (Common buckwheat).